The chain runs to 332 residues: Beta-ketoacyl-[acyl-carrier-protein] synthase III (332 aa).

Residues cysteine 112 and histidine 252 contribute to the active site. The ACP-binding stretch occupies residues 253-257 (QANLR). Residue asparagine 282 is part of the active site.

Belongs to the thiolase-like superfamily. FabH family. As to quaternary structure, homodimer.

It localises to the cytoplasm. The catalysed reaction is malonyl-[ACP] + acetyl-CoA + H(+) = 3-oxobutanoyl-[ACP] + CO2 + CoA. The protein operates within lipid metabolism; fatty acid biosynthesis. Its function is as follows. Catalyzes the condensation reaction of fatty acid synthesis by the addition to an acyl acceptor of two carbons from malonyl-ACP. Catalyzes the first condensation reaction which initiates fatty acid synthesis and may therefore play a role in governing the total rate of fatty acid production. Possesses both acetoacetyl-ACP synthase and acetyl transacylase activities. Its substrate specificity determines the biosynthesis of branched-chain and/or straight-chain of fatty acids. The polypeptide is Beta-ketoacyl-[acyl-carrier-protein] synthase III (Syntrophomonas wolfei subsp. wolfei (strain DSM 2245B / Goettingen)).